Reading from the N-terminus, the 242-residue chain is Outer membrane protein class 4 (242 aa).

Positions 1-22 (MTKQLKLSALFVALLASGTAVA) are cleaved as a signal peptide. 7 tandem repeats follow at residues 69-70 (AP), 71-72 (EP), 73-74 (EP), 75-76 (EP), 77-78 (EP), 79-80 (AP), and 81-82 (AP). The tract at residues 69–82 (APEPEPEPEPAPAP) is 7 X 2 AA tandem repeats of X-P. The 138-residue stretch at 92–229 (YVDETISLSA…RVDVKIRSIV (138 aa)) folds into the OmpA-like domain. Cysteines 191 and 214 form a disulfide.

The protein belongs to the outer membrane OOP (TC 1.B.6) superfamily.

It localises to the cell outer membrane. The polypeptide is Outer membrane protein class 4 (rmpM) (Neisseria meningitidis serogroup A / serotype 4A (strain DSM 15465 / Z2491)).